The following is a 137-amino-acid chain: ATP synthase epsilon chain, chloroplastic (137 aa).

The protein belongs to the ATPase epsilon chain family. In terms of assembly, F-type ATPases have 2 components, CF(1) - the catalytic core - and CF(0) - the membrane proton channel. CF(1) has five subunits: alpha(3), beta(3), gamma(1), delta(1), epsilon(1). CF(0) has three main subunits: a, b and c.

Its subcellular location is the plastid. The protein resides in the chloroplast thylakoid membrane. Produces ATP from ADP in the presence of a proton gradient across the membrane. In Pisum sativum (Garden pea), this protein is ATP synthase epsilon chain, chloroplastic.